The sequence spans 396 residues: Elongation factor Tu (396 aa).

A tr-type G domain is found at 10-206 (KPHVNVGTIG…ALDTYIPTPE (197 aa)). Residues 19-26 (GHVDHGKT) are G1. A GTP-binding site is contributed by 19–26 (GHVDHGKT). Position 26 (T26) interacts with Mg(2+). The interval 60–64 (GITIN) is G2. Residues 81–84 (DCPG) are G3. GTP-binding positions include 81–85 (DCPGH) and 136–139 (NKCD). The segment at 136-139 (NKCD) is G4. Residues 174 to 176 (SAK) form a G5 region.

Belongs to the TRAFAC class translation factor GTPase superfamily. Classic translation factor GTPase family. EF-Tu/EF-1A subfamily. As to quaternary structure, monomer.

Its subcellular location is the cytoplasm. The catalysed reaction is GTP + H2O = GDP + phosphate + H(+). Its function is as follows. GTP hydrolase that promotes the GTP-dependent binding of aminoacyl-tRNA to the A-site of ribosomes during protein biosynthesis. This chain is Elongation factor Tu, found in Burkholderia mallei (strain NCTC 10247).